Here is a 241-residue protein sequence, read N- to C-terminus: ATP synthase subunit a (241 aa).

A run of 8 helical transmembrane segments spans residues 29 to 49 (NSSL…LFGI), 54 to 74 (VIPG…ISII), 86 to 106 (IPLI…GVLP), 114 to 134 (HVIV…IVGF), 153 to 173 (WLAP…PVSL), 177 to 197 (LAAN…FIVN), 200 to 220 (IFFT…EVFV), and 221 to 241 (AILQ…DAVK).

The protein belongs to the ATPase A chain family. In terms of assembly, F-type ATPases have 2 components, CF(1) - the catalytic core - and CF(0) - the membrane proton channel. CF(1) has five subunits: alpha(3), beta(3), gamma(1), delta(1), epsilon(1). CF(0) has three main subunits: a(1), b(2) and c(9-12). The alpha and beta chains form an alternating ring which encloses part of the gamma chain. CF(1) is attached to CF(0) by a central stalk formed by the gamma and epsilon chains, while a peripheral stalk is formed by the delta and b chains.

The protein localises to the cell inner membrane. Key component of the proton channel; it plays a direct role in the translocation of protons across the membrane. The protein is ATP synthase subunit a of Wolbachia sp. subsp. Drosophila simulans (strain wRi).